We begin with the raw amino-acid sequence, 815 residues long: Cell division control protein 48 homolog D (815 aa).

Ala2 carries the post-translational modification N-acetylalanine. Ser42 carries the post-translational modification Phosphoserine. ATP-binding positions include 249–256 (GPPGSGKT) and 522–529 (GPPGCGKT). Ser720 carries the phosphoserine modification. The segment at 772-815 (GSEFRFPDAPTGTTGAFPGAAATVGGVDPFATSGGAADDDDLYS) is disordered. The segment covering 780–798 (APTGTTGAFPGAAATVGGV) has biased composition (low complexity).

The protein belongs to the AAA ATPase family.

Its subcellular location is the nucleus. It is found in the cytoplasm. It localises to the cytoskeleton. The protein resides in the phragmoplast. Its function is as follows. Probably functions in cell division and growth processes. Interacts with certain SNAREs as part of specialized membrane fusion events where vesicles from the same organelle fuse (homotypic fusion). The sequence is that of Cell division control protein 48 homolog D (CDC48D) from Arabidopsis thaliana (Mouse-ear cress).